Reading from the N-terminus, the 167-residue chain is Zinc finger CCCH domain-containing protein 3 (167 aa).

Residues 63–91 (AAAIGVCQHFVRTGTCKFGDSCRYFHPKP) form a C3H1-type zinc finger. The span at 89–101 (PKPPPANPGPAPS) shows a compositional bias: pro residues. The segment at 89–167 (PKPPPANPGP…YPPFPFVDWG (79 aa)) is disordered. The span at 108 to 120 (MAQQSNIQGSQPN) shows a compositional bias: polar residues. Positions 149-167 (SLRPPPEGGYPPFPFVDWG) are enriched in pro residues.

The chain is Zinc finger CCCH domain-containing protein 3 from Oryza sativa subsp. japonica (Rice).